We begin with the raw amino-acid sequence, 131 residues long: Putative pre-16S rRNA nuclease (131 aa).

This sequence belongs to the YqgF nuclease family.

The protein localises to the cytoplasm. Functionally, could be a nuclease involved in processing of the 5'-end of pre-16S rRNA. The protein is Putative pre-16S rRNA nuclease of Bordetella avium (strain 197N).